The following is a 100-amino-acid chain: Large ribosomal subunit protein eL21 (100 aa).

Residues 1–21 (MVKRTHGYRYKSRKLLRKKPR) show a composition bias toward basic residues. The interval 1-22 (MVKRTHGYRYKSRKLLRKKPRE) is disordered.

It belongs to the eukaryotic ribosomal protein eL21 family.

In Pyrobaculum neutrophilum (strain DSM 2338 / JCM 9278 / NBRC 100436 / V24Sta) (Thermoproteus neutrophilus), this protein is Large ribosomal subunit protein eL21.